The following is a 258-amino-acid chain: Indole-3-glycerol phosphate synthase (258 aa).

This sequence belongs to the TrpC family.

It carries out the reaction 1-(2-carboxyphenylamino)-1-deoxy-D-ribulose 5-phosphate + H(+) = (1S,2R)-1-C-(indol-3-yl)glycerol 3-phosphate + CO2 + H2O. It functions in the pathway amino-acid biosynthesis; L-tryptophan biosynthesis; L-tryptophan from chorismate: step 4/5. In Endomicrobium trichonymphae, this protein is Indole-3-glycerol phosphate synthase.